The primary structure comprises 242 residues: GDSL esterase/lipase At5g62930 (242 aa).

The active-site Nucleophile is Ser-11. The interval 223–242 is disordered; sequence PHHSHIDGKNPSKAFEERCL.

The protein belongs to the 'GDSL' lipolytic enzyme family.

This chain is GDSL esterase/lipase At5g62930, found in Arabidopsis thaliana (Mouse-ear cress).